Consider the following 405-residue polypeptide: 8-amino-7-oxononanoate synthase 1 (405 aa).

Position 29 (Arg29) interacts with substrate. Residue 116–117 (GY) participates in pyridoxal 5'-phosphate binding. Residue His141 participates in substrate binding. Pyridoxal 5'-phosphate contacts are provided by Ser187, His215, and Thr247. N6-(pyridoxal phosphate)lysine is present on Lys250. Substrate is bound at residue Thr368.

Belongs to the class-II pyridoxal-phosphate-dependent aminotransferase family. BioF subfamily. In terms of assembly, homodimer. Requires pyridoxal 5'-phosphate as cofactor.

It carries out the reaction 6-carboxyhexanoyl-[ACP] + L-alanine + H(+) = (8S)-8-amino-7-oxononanoate + holo-[ACP] + CO2. Its pathway is cofactor biosynthesis; biotin biosynthesis. In terms of biological role, catalyzes the decarboxylative condensation of pimeloyl-[acyl-carrier protein] and L-alanine to produce 8-amino-7-oxononanoate (AON), [acyl-carrier protein], and carbon dioxide. The chain is 8-amino-7-oxononanoate synthase 1 from Polaromonas sp. (strain JS666 / ATCC BAA-500).